The primary structure comprises 126 residues: Plastocyanin (126 aa).

The N-terminal stretch at 1–28 (MSKKFLTILAGLLLVVSSFFLSVSPAAA) is a signal peptide. A Plastocyanin-like domain is found at 29–126 (ANATVKMGSD…AGMVGKVVVE (98 aa)). Cu cation-binding residues include His-67, Cys-111, His-114, and Met-119.

Belongs to the plastocyanin family. Requires Cu(2+) as cofactor.

It localises to the cellular thylakoid membrane. Functionally, participates in electron transfer between P700 and the cytochrome b6-f complex in photosystem I. The sequence is that of Plastocyanin (petE) from Synechocystis sp. (strain ATCC 27184 / PCC 6803 / Kazusa).